Consider the following 364-residue polypeptide: MPLNKRFTLTQYLIQERRRFPDARGDFNALILDVALACKAIARAVAFGELGGMLGNHDADAGGSINVQGETQKKLDVISNQYFTRMNEWGGHLAGMASEEMDDAYQIPAEHPRGKYLLVFDPLDGSSNIDVNVSVGSIFSILRAPQEAVESGRDVVEADFFQPGAEQVAAGYALYGPTTMLVLSVGNGVAGFTLDPMLGEFMLTHDKLQVPENTQEFAINASNSRFWEPPVKRYVDECLAGKTGPRDKDFNMRWIASMVAEAHRILMRGGVFLYPRDSKDAAKPGRLRLLYEANPIGFIMEQAGGRASTGREPMLGVQPTSLHQRIGLIFGSKNEVERIERYHAEPARAEMHNPLFAERSLFRS.

Mg(2+)-binding residues include E99, D121, L123, and D124. Substrate-binding positions include 124–127 and N220; that span reads DGSS. E292 is a binding site for Mg(2+).

Belongs to the FBPase class 1 family. As to quaternary structure, homotetramer. Mg(2+) is required as a cofactor.

The protein localises to the cytoplasm. It carries out the reaction beta-D-fructose 1,6-bisphosphate + H2O = beta-D-fructose 6-phosphate + phosphate. Its pathway is carbohydrate biosynthesis; gluconeogenesis. In Polaromonas naphthalenivorans (strain CJ2), this protein is Fructose-1,6-bisphosphatase class 1 2.